A 153-amino-acid polypeptide reads, in one-letter code: Peptide deformylase (153 aa).

Cys87 and His129 together coordinate Fe cation. Glu130 is a catalytic residue. His133 provides a ligand contact to Fe cation.

The protein belongs to the polypeptide deformylase family. Fe(2+) serves as cofactor.

The catalysed reaction is N-terminal N-formyl-L-methionyl-[peptide] + H2O = N-terminal L-methionyl-[peptide] + formate. Its function is as follows. Removes the formyl group from the N-terminal Met of newly synthesized proteins. Requires at least a dipeptide for an efficient rate of reaction. N-terminal L-methionine is a prerequisite for activity but the enzyme has broad specificity at other positions. This Dictyoglomus turgidum (strain DSM 6724 / Z-1310) protein is Peptide deformylase.